The following is a 383-amino-acid chain: 3-phytase (383 aa).

Positions 1–26 (MNHSKTLLLTAAAGLMLTCGAVSSQA) are cleaved as a signal peptide. A propeptide spanning residues 27–29 (KHK) is cleaved from the precursor. The region spanning 30 to 362 (LSDPYHFTVN…VPWERIADQI (333 aa)) is the BPP domain.

The cofactor is Ca(2+).

The protein localises to the secreted. It catalyses the reaction 1D-myo-inositol hexakisphosphate + H2O = 1D-myo-inositol 1,2,4,5,6-pentakisphosphate + phosphate. Functionally, catalyzes the hydrolysis of inorganic orthophosphate from phytate. Only phytate, ADP, and ATP were hydrolyzed (100, 75, and 50% of the relative activity, respectively). This chain is 3-phytase (phyC), found in Bacillus subtilis.